An 837-amino-acid polypeptide reads, in one-letter code: Protein TRANSPARENT TESTA 9 (837 aa).

In terms of domain architecture, FPL spans 42–192; that stretch reads LRSIAEILTY…AVRALTLNVY (151 aa). The segment at 366 to 386 is disordered; it reads TEEANQQCSSTAAGMSDDGNS. The segment covering 368 to 378 has biased composition (polar residues); that stretch reads EANQQCSSTAA.

This sequence belongs to the CLEC16A/gop-1 family.

The protein resides in the golgi apparatus membrane. In terms of biological role, involved in membrane trafficking and vacuole development through membrane fusion at the vacuole. Required for membrane trafficking machinery and accumulation of flavonoids in the seed coat. The chain is Protein TRANSPARENT TESTA 9 from Arabidopsis thaliana (Mouse-ear cress).